We begin with the raw amino-acid sequence, 642 residues long: Threonine--tRNA ligase (642 aa).

The TGS domain maps to 1 to 61 (MPVITLPDGS…ETDAELSIIT (61 aa)). The interval 243–534 (DHRKIGKQLD…LIEEYAGRFP (292 aa)) is catalytic. Positions 334, 385, and 511 each coordinate Zn(2+).

It belongs to the class-II aminoacyl-tRNA synthetase family. In terms of assembly, homodimer. Zn(2+) serves as cofactor.

The protein resides in the cytoplasm. The enzyme catalyses tRNA(Thr) + L-threonine + ATP = L-threonyl-tRNA(Thr) + AMP + diphosphate + H(+). In terms of biological role, catalyzes the attachment of threonine to tRNA(Thr) in a two-step reaction: L-threonine is first activated by ATP to form Thr-AMP and then transferred to the acceptor end of tRNA(Thr). Also edits incorrectly charged L-seryl-tRNA(Thr). In Shewanella putrefaciens (strain CN-32 / ATCC BAA-453), this protein is Threonine--tRNA ligase.